The primary structure comprises 281 residues: Glycerol uptake facilitator protein (281 aa).

Residues 1–5 (MSQTS) are Cytoplasmic-facing. The helical transmembrane segment at 6 to 34 (TLKGQCIAEFLGTGLLIFFGVGCVAALKV) threads the bilayer. Over 35–39 (AGASF) the chain is Periplasmic. A helical transmembrane segment spans residues 40 to 60 (GQWEISVIWGLGVAMAIYLTA). Residues 61-63 (GVS) lie on the Cytoplasmic side of the membrane. An intramembrane segment occupies 64 to 67 (GAHL). The NPA 1 signature appears at 68 to 70 (NPA). Residues 68-78 (NPAVTIALWLF) constitute an intramembrane region (helical). Residues 79-84 (ACFDKR) lie on the Cytoplasmic side of the membrane. A helical membrane pass occupies residues 85–108 (KVIPFIVSQVAGAFCAAALVYGLY). At 109–143 (YNLFFDFEQTHHIVRGSVESVDLAGTFSTYPNPHI) the chain is on the periplasmic side. A helical transmembrane segment spans residues 144 to 169 (NFVQAFAVEMVITAILMGLILALTDD). At 170–177 (GNGVPRGP) the chain is on the cytoplasmic side. A helical membrane pass occupies residues 178 to 194 (LAPLLIGLLIAVIGASM). Over 195–198 (GPLT) the chain is Periplasmic. The stretch at 199–202 (GFAM) is an intramembrane region. The NPA 2 motif lies at 203–205 (NPA). The helical intramembrane region spans 203 to 216 (NPARDFGPKVFAWL). Topologically, residues 217–231 (AGWGNVAFTGGRDIP) are periplasmic. A helical membrane pass occupies residues 232–254 (YFLVPLFSPIVGAIVGAFAYRKL). The Cytoplasmic portion of the chain corresponds to 255–281 (IGRHLPCDICVVEEKETTTPSEQKASL).

The protein belongs to the MIP/aquaporin (TC 1.A.8) family. Homotetramer.

The protein resides in the cell inner membrane. It catalyses the reaction glycerol(in) = glycerol(out). Its function is as follows. Mediates glycerol diffusion across the cytoplasmic membrane via a pore-type mechanism. The protein is Glycerol uptake facilitator protein (glpF) of Shigella flexneri.